The following is a 60-amino-acid chain: Potassium channel toxin MeuTXKalpha3 (60 aa).

The signal sequence occupies residues 1–22; it reads MKNYCGIITLFLAIISATGVFC. 3 cysteine pairs are disulfide-bonded: Cys-32–Cys-50, Cys-37–Cys-55, and Cys-41–Cys-57. Pro-59 bears the Proline amide mark.

Belongs to the short scorpion toxin superfamily. Potassium channel inhibitor family. Expressed by the venom gland.

It localises to the secreted. May block voltage-gated potassium channels (Kv). The protein is Potassium channel toxin MeuTXKalpha3 of Mesobuthus eupeus (Lesser Asian scorpion).